We begin with the raw amino-acid sequence, 680 residues long: MSIREKLLMKKIVKREKMKKELSQKKGNKNAQKQEPPKQNGNKPSKKPEKLSKKHVAKDEDDDLEEDFQEAPLPKKKQQKQPPKKQQIQVANSDSESDDDEQEDEADEDSDLDEVAEVDEEDVDSGSEDDDQQEDEDEEEPVPAKKTKLLPNKSKAQNGKPAKDDEPFTVESSLAALDYRDSDDRSFASLKGAVSEATLRAIKEMGFTEMTEIQSKSLTPLLKGRDLVGAAQTGSGKTLAFLIPAVELINKLRFMPRNGTGVIIISPTRELSMQTFGVLKELMAHHHHTYGLVMGGSNRQVESEKLGKGINILVATPGRLLDHLQNSPDFLYKNLQCLIIDEVDRILEIGFEEELKQIINLLPKRRQTMLFSATQTARIEALSKLALKSEPIYVGVHDNQDTATVDGLEQGYIVCPSEKRLLVLFTFLKKNRKKKVMVFFSSCMSVKYHHELFNYIDLPVTSIHGKQKQTKRTTTFFQFCNAESGILLCTDVAARGLDIPQVDWIVQYDPPDDPREYIHRVGRTARGSGTSGHALLLMRPEELGFLRYLKAAKVPLNEFEFSWQKIADIQLQLEKLIAKNYFLNQSAKEAFKSYVRAYDSHQLKQIFNVNTLDLQAVAKSFGFLVPPVVDLKVGAAKRERPEKRVGGGGFGFYKKMNEGSASKQRHFKQVNRDQAKKFMR.

The tract at residues Met-1 to Phe-168 is disordered. A compositionally biased stretch (polar residues) spans Lys-29–Asn-42. Acidic residues predominate over residues Asp-59 to Gln-69. The span at Pro-74–Pro-83 shows a compositional bias: basic residues. Over residues Ser-95–Pro-141 the composition is skewed to acidic residues. A Q motif motif is present at residues Phe-187–Ser-215. The Helicase ATP-binding domain occupies Leu-218–Tyr-393. Ala-231–Thr-238 contributes to the ATP binding site. The short motif at Asp-341–Asp-344 is the DEVD box element. Residues Gly-407–Ile-577 enclose the Helicase C-terminal domain. Residues Gly-659–Arg-680 form a disordered region. Positions Val-670–Arg-680 are enriched in basic and acidic residues.

It belongs to the DEAD box helicase family. DDX18/HAS1 subfamily.

Its subcellular location is the nucleus. The protein localises to the nucleolus. It catalyses the reaction ATP + H2O = ADP + phosphate + H(+). Probable RNA-dependent helicase. Functions in cell growth and proliferation. May have a role in ribosome biogenesis and, consequently, in protein biosynthesis. This chain is Probable ATP-dependent RNA helicase pitchoune (pit), found in Drosophila melanogaster (Fruit fly).